The sequence spans 608 residues: Fatty acid amide hydrolase (608 aa).

Residues Lys206 and Ser282 each act as charge relay system in the active site. Residue 303–306 (GGGS) coordinates substrate. Ser306 serves as the catalytic Acyl-ester intermediate.

This sequence belongs to the amidase family. Forms homodimers.

The protein localises to the endoplasmic reticulum membrane. Its subcellular location is the cell membrane. It carries out the reaction N-(9Z,12Z-octadecadienoyl)-ethanolamine + H2O = ethanolamine + (9Z,12Z)-octadecadienoate. The catalysed reaction is N-hexadecanoylethanolamine + H2O = ethanolamine + hexadecanoate. It catalyses the reaction N-dodecanoylethanolamine + H2O = dodecanoate + ethanolamine. Inhibited by methyl arachidonyl fluorophosphonate (MAFP). In terms of biological role, catalyzes the hydrolysis of bioactive endogenous fatty acid amides to their corresponding acids. The hydrolysis of endogenous amidated lipids terminates their participation as lipid mediators in various signaling systems. Converts a wide range of N-acylethanolamines (NAEs) to their corresponding free fatty acids and ethanolamine. This chain is Fatty acid amide hydrolase, found in Oryza sativa subsp. indica (Rice).